Reading from the N-terminus, the 418-residue chain is Serine hydroxymethyltransferase (418 aa).

(6S)-5,6,7,8-tetrahydrofolate-binding positions include L121 and G125–L127. Residue K230 is modified to N6-(pyridoxal phosphate)lysine. S356–F358 provides a ligand contact to (6S)-5,6,7,8-tetrahydrofolate.

The protein belongs to the SHMT family. As to quaternary structure, homodimer. Requires pyridoxal 5'-phosphate as cofactor.

The protein resides in the cytoplasm. The catalysed reaction is (6R)-5,10-methylene-5,6,7,8-tetrahydrofolate + glycine + H2O = (6S)-5,6,7,8-tetrahydrofolate + L-serine. The protein operates within one-carbon metabolism; tetrahydrofolate interconversion. It participates in amino-acid biosynthesis; glycine biosynthesis; glycine from L-serine: step 1/1. Functionally, catalyzes the reversible interconversion of serine and glycine with tetrahydrofolate (THF) serving as the one-carbon carrier. This reaction serves as the major source of one-carbon groups required for the biosynthesis of purines, thymidylate, methionine, and other important biomolecules. Also exhibits THF-independent aldolase activity toward beta-hydroxyamino acids, producing glycine and aldehydes, via a retro-aldol mechanism. The protein is Serine hydroxymethyltransferase of Alteromonas mediterranea (strain DSM 17117 / CIP 110805 / LMG 28347 / Deep ecotype).